The chain runs to 186 residues: Ran guanine nucleotide release factor (186 aa).

The interval 27–70 (DLRPVPDNQEVFCHPVTDQSLIVELLELQAHVRGEAAARYHFED) is interaction with RAN.

The protein belongs to the MOG1 family. Monomer. Interacts with RAN, both RAN-GTP and RAN-GDP. Competes with RCC1 for a common binding site on RAN and thereby inhibits RCC1-mediated nucleotide exchange. Forms a complex with RAN-GTP and RANBP1. Interacts with the cytoplasmic loop 2 of SCN5A. Isoform 1 and isoform 2 are ubiquitously expressed. Detected in heart and brain.

It is found in the nucleus. It localises to the cytoplasm. The protein resides in the perinuclear region. Its subcellular location is the cell membrane. Its function is as follows. May regulate the intracellular trafficking of RAN. Promotes guanine nucleotide release from RAN and inhibits binding of new GTP by preventing the binding of the RAN guanine nucleotide exchange factor RCC1. Regulates the levels of GTP-bound RAN in the nucleus, and thereby plays a role in the regulation of RAN-dependent mitotic spindle dynamics. Enhances the expression of SCN5A at the cell membrane in cardiomyocytes. This chain is Ran guanine nucleotide release factor (RANGRF), found in Homo sapiens (Human).